Consider the following 203-residue polypeptide: Auxin-induced protein 22E (203 aa).

The EAR-like (transcriptional repression) signature appears at 15–19 (LRLGL). Residues 15 to 77 (LRLGLPGSDE…DHNEDSVQPA (63 aa)) are disordered. A compositionally biased stretch (basic and acidic residues) spans 43 to 52 (SSPELEESRC). Positions 58 to 67 (SDSSDSTTTS) are enriched in low complexity. One can recognise a PB1 domain in the interval 107 to 199 (GMYLKVSMAG…RIIKGSEAKG (93 aa)).

Belongs to the Aux/IAA family. As to quaternary structure, homodimers and heterodimers.

Its subcellular location is the nucleus. In terms of biological role, aux/IAA proteins are short-lived transcriptional factors that function as repressors of early auxin response genes at low auxin concentrations. Repression is thought to result from the interaction with auxin response factors (ARFs), proteins that bind to the auxin-responsive promoter element (AuxRE). Formation of heterodimers with ARF proteins may alter their ability to modulate early auxin response genes expression. In Vigna radiata var. radiata (Mung bean), this protein is Auxin-induced protein 22E (AUX22E).